The sequence spans 524 residues: Excitatory amino acid transporter 3 (524 aa).

Residues 1–18 lie on the Cytoplasmic side of the membrane; sequence MGKPARKGCEWKRFLKNN. The helical transmembrane segment at 19-38 threads the bilayer; sequence WVLLSTVAAVVLGITTGVLV. At 39–61 the chain is on the extracellular side; sequence REHSNLSTLEKFYFAFPGEILMR. Asn-43 is a glycosylation site (N-linked (GlcNAc...) asparagine). A helical transmembrane segment spans residues 62 to 82; the sequence is MLKLIILPLIISSMITGVAAL. Over 83–93 the chain is Cytoplasmic; sequence DSNVSGKIGLR. Residues 94–114 form a helical membrane-spanning segment; the sequence is AVVYYFCTTLIAVILGIVLVV. Residues Tyr-98, Thr-101, and Thr-102 each coordinate Na(+). Residues 115-205 lie on the Extracellular side of the membrane; that stretch reads SIKPGVTQKV…KTKEYKIVGM (91 aa). Residues Asn-178 and Asn-195 are each glycosylated (N-linked (GlcNAc...) asparagine). The helical transmembrane segment at 206 to 229 threads the bilayer; sequence YSDGINVLGLIVFCLVFGLVIGKM. Residues 230 to 238 are Cytoplasmic-facing; that stretch reads GEKGQILVD. A helical membrane pass occupies residues 239–266; it reads FFNALSDATMKIVQIIMCYMPLGILFLI. Topologically, residues 267 to 286 are extracellular; it reads AGKIIEVEDWEIFRKLGLYM. A helical membrane pass occupies residues 287–308; that stretch reads ATVLTGLAIHSIVILPLIYFIV. At 309–313 the chain is on the cytoplasmic side; the sequence is VRKNP. Residues 314–344 constitute an intramembrane region (discontinuously helical); sequence FRFAMGMAQALLTALMISSSSATLPVTFRCA. L-aspartate contacts are provided by Ser-331 and Ser-333. Topologically, residues 345-353 are cytoplasmic; that stretch reads EENNQVDKR. Residues 354-380 traverse the membrane as a helical segment; that stretch reads ITRFVLPVGATINMDGTALYEAVAAVF. The Na(+) site is built by Gly-362, Thr-364, Asn-366, and Asp-368. Thr-370 contacts L-aspartate. Over 381 to 393 the chain is Extracellular; the sequence is IAQLNDLDLGIGQ. Positions 394–427 form an intramembrane region, discontinuously helical; it reads IITISITATSASIGAAGVPQAGLVTMVIVLSAVG. The Na(+) site is built by Ser-405, Ile-406, and Ala-408. Residue Val-411 participates in L-aspartate binding. The Extracellular portion of the chain corresponds to 428–440; it reads LPAEDVTLIIAVD. A helical membrane pass occupies residues 441–462; it reads WLLDRFRTMVNVLGDAFGTGIV. Positions 447, 448, and 451 each coordinate L-aspartate. Positions 451 and 455 each coordinate Na(+). The Cytoplasmic portion of the chain corresponds to 463-524; it reads EKLSKKELEQ…TISFTQTSQF (62 aa). 2 positions are modified to phosphoserine: Ser-517 and Ser-522.

Belongs to the dicarboxylate/amino acid:cation symporter (DAACS) (TC 2.A.23) family. SLC1A1 subfamily. As to quaternary structure, homotrimer. Interacts with ARL6IP5. Interacts with RTN2 (via N-terminus); the interaction promotes cell surface expression of SLC1A1. Interacts with SORCS2; this interaction is important for normal expression at the cell membrane. Glycosylated. As to expression, expressed in all tissues tested including liver, muscle, testis, ovary, retinoblastoma cell line, neurons and brain (in which there was dense expression in substantia nigra, red nucleus, hippocampus and in cerebral cortical layers).

Its subcellular location is the cell membrane. It is found in the apical cell membrane. The protein resides in the synapse. The protein localises to the synaptosome. It localises to the early endosome membrane. Its subcellular location is the late endosome membrane. It is found in the recycling endosome membrane. It carries out the reaction K(+)(in) + L-glutamate(out) + 3 Na(+)(out) + H(+)(out) = K(+)(out) + L-glutamate(in) + 3 Na(+)(in) + H(+)(in). It catalyses the reaction K(+)(in) + L-aspartate(out) + 3 Na(+)(out) + H(+)(out) = K(+)(out) + L-aspartate(in) + 3 Na(+)(in) + H(+)(in). The enzyme catalyses D-aspartate(out) + K(+)(in) + 3 Na(+)(out) + H(+)(out) = D-aspartate(in) + K(+)(out) + 3 Na(+)(in) + H(+)(in). The catalysed reaction is K(+)(in) + L-cysteine(out) + 3 Na(+)(out) + H(+)(out) = K(+)(out) + L-cysteine(in) + 3 Na(+)(in) + H(+)(in). Functionally, sodium-dependent, high-affinity amino acid transporter that mediates the uptake of L-glutamate and also L-aspartate and D-aspartate. Can also transport L-cysteine. Functions as a symporter that transports one amino acid molecule together with two or three Na(+) ions and one proton, in parallel with the counter-transport of one K(+) ion. Mediates Cl(-) flux that is not coupled to amino acid transport; this avoids the accumulation of negative charges due to aspartate and Na(+) symport. Plays an important role in L-glutamate and L-aspartate reabsorption in renal tubuli. Plays a redundant role in the rapid removal of released glutamate from the synaptic cleft, which is essential for terminating the postsynaptic action of glutamate. Contributes to glutathione biosynthesis and protection against oxidative stress via its role in L-glutamate and L-cysteine transport. Negatively regulated by ARL6IP5. This Homo sapiens (Human) protein is Excitatory amino acid transporter 3.